The chain runs to 283 residues: Pantothenate synthetase (283 aa).

31–38 (MGALHDGH) contacts ATP. Histidine 38 functions as the Proton donor in the catalytic mechanism. (R)-pantoate is bound at residue glutamine 62. Glutamine 62 is a beta-alanine binding site. Position 148 to 151 (148 to 151 (GKKD)) interacts with ATP. Glutamine 154 is a (R)-pantoate binding site. ATP contacts are provided by residues valine 177 and 185–188 (KSSR).

Belongs to the pantothenate synthetase family. As to quaternary structure, homodimer.

The protein resides in the cytoplasm. The enzyme catalyses (R)-pantoate + beta-alanine + ATP = (R)-pantothenate + AMP + diphosphate + H(+). The protein operates within cofactor biosynthesis; (R)-pantothenate biosynthesis; (R)-pantothenate from (R)-pantoate and beta-alanine: step 1/1. Functionally, catalyzes the condensation of pantoate with beta-alanine in an ATP-dependent reaction via a pantoyl-adenylate intermediate. This Staphylococcus aureus (strain USA300) protein is Pantothenate synthetase.